The sequence spans 379 residues: Cytochrome b (379 aa).

4 consecutive transmembrane segments (helical) span residues 33 to 53 (FGSL…FLAM), 77 to 98 (WLIR…FIHV), 113 to 133 (WNIG…GYVL), and 178 to 198 (FFAF…VHLL). The heme b site is built by H83 and H97. 2 residues coordinate heme b: H182 and H196. H201 is a binding site for a ubiquinone. 4 helical membrane-spanning segments follow: residues 226 to 246 (TKDL…ALFF), 288 to 308 (LGGV…PLLN), 320 to 340 (ITQV…WIGG), and 347 to 367 (FTMI…ILIP).

This sequence belongs to the cytochrome b family. As to quaternary structure, the cytochrome bc1 complex contains 11 subunits: 3 respiratory subunits (MT-CYB, CYC1 and UQCRFS1), 2 core proteins (UQCRC1 and UQCRC2) and 6 low-molecular weight proteins (UQCRH/QCR6, UQCRB/QCR7, UQCRQ/QCR8, UQCR10/QCR9, UQCR11/QCR10 and a cleavage product of UQCRFS1). This cytochrome bc1 complex then forms a dimer. Requires heme b as cofactor.

The protein localises to the mitochondrion inner membrane. Functionally, component of the ubiquinol-cytochrome c reductase complex (complex III or cytochrome b-c1 complex) that is part of the mitochondrial respiratory chain. The b-c1 complex mediates electron transfer from ubiquinol to cytochrome c. Contributes to the generation of a proton gradient across the mitochondrial membrane that is then used for ATP synthesis. The protein is Cytochrome b (MT-CYB) of Akodon spegazzinii (Spegazzini's grass mouse).